Reading from the N-terminus, the 30-residue chain is EDDHDHHHHHHHHHHHHGVGGGGGGGGGGA.

The span at 1 to 18 (EDDHDHHHHHHHHHHHHG) shows a compositional bias: basic residues. Residues 1–30 (EDDHDHHHHHHHHHHHHGVGGGGGGGGGGA) form a disordered region. The span at 19 to 30 (VGGGGGGGGGGA) shows a compositional bias: gly residues.

Expressed by the venom gland.

It localises to the secreted. In terms of biological role, may serve as a metalloproteinase inhibitor during glandular storage. Their inhibition may be instantly disengaged, by dilution or physiochemical change, when venom is injected into tissue of the victim. In Atheris nitschei (Great lakes bush viper), this protein is Poly-His-poly-Gly peptide 2.